The primary structure comprises 98 residues: DNA-binding protein Fis (98 aa).

The segment at residues Gln-74–Lys-93 is a DNA-binding region (H-T-H motif).

The protein belongs to the transcriptional regulatory Fis family. Homodimer.

Its function is as follows. Activates ribosomal RNA transcription. Plays a direct role in upstream activation of rRNA promoters. The protein is DNA-binding protein Fis of Pectobacterium atrosepticum (strain SCRI 1043 / ATCC BAA-672) (Erwinia carotovora subsp. atroseptica).